We begin with the raw amino-acid sequence, 405 residues long: Acetate kinase (405 aa).

Residue N7 coordinates Mg(2+). K14 is a binding site for ATP. R90 contributes to the substrate binding site. Catalysis depends on D147, which acts as the Proton donor/acceptor. ATP-binding positions include 207-211, 282-284, and 331-335; these read HLGNG, DFR, and GVGEN. E384 contacts Mg(2+).

The protein belongs to the acetokinase family. As to quaternary structure, homodimer. The cofactor is Mg(2+). Requires Mn(2+) as cofactor.

Its subcellular location is the cytoplasm. It catalyses the reaction acetate + ATP = acetyl phosphate + ADP. It participates in metabolic intermediate biosynthesis; acetyl-CoA biosynthesis; acetyl-CoA from acetate: step 1/2. Its function is as follows. Catalyzes the formation of acetyl phosphate from acetate and ATP. Can also catalyze the reverse reaction. In Clostridium kluyveri (strain ATCC 8527 / DSM 555 / NBRC 12016 / NCIMB 10680 / K1), this protein is Acetate kinase.